The following is a 510-amino-acid chain: 2,3-bisphosphoglycerate-independent phosphoglycerate mutase (510 aa).

Residue D12 coordinates Mn(2+). Y36 carries the post-translational modification Phosphotyrosine. S62 lines the Mn(2+) pocket. Catalysis depends on S62, which acts as the Phosphoserine intermediate. Substrate is bound by residues H123, 153-154, R185, R191, 261-264, and K336; these read RD and RPDR. Mn(2+) is bound by residues D403, H407, D444, H445, and H462.

The protein belongs to the BPG-independent phosphoglycerate mutase family. Monomer. Requires Mn(2+) as cofactor.

It catalyses the reaction (2R)-2-phosphoglycerate = (2R)-3-phosphoglycerate. It participates in carbohydrate degradation; glycolysis; pyruvate from D-glyceraldehyde 3-phosphate: step 3/5. In terms of biological role, essential for rapid growth and for sporulation. Catalyzes the interconversion of 2-phosphoglycerate and 3-phosphoglycerate. This chain is 2,3-bisphosphoglycerate-independent phosphoglycerate mutase, found in Shouchella clausii (strain KSM-K16) (Alkalihalobacillus clausii).